Reading from the N-terminus, the 466-residue chain is MQQHFHFDAIVIGSGPGGEGAAMGLVKQGARVAVIERYNNVGGGCTHWGTIPSKALRHAVSRIIEFNQNPLYSDNARTISSSFSDILNHADRVINQQTRMRQGFYDRNHCQMFSGDASFIDANTINVRYADGTNDTLRADNIVIATGSRPYRPANVDFTHERIYDSDTILQLSHEPQHVIIYGAGVIGCEYASIFRGLSVKVDLINTRDRLLAFLDQEMSDALSYHFWNNGVVIRHNEEFEQIEGTVDGVIVHLKSGKKVKADCLLYANGRTGNTSGLGLEKIGLEADSRGLLKVNSMYQTALSHVYAVGDVIGYPSLASAAYDQGRIAAQAMIKGEANTHLIEDIPTGIYTIPEISSVGKTEQDLTAMKVPYEVGRAQFKHLARAQIVGMDTGSLKILFHRETKQILGIHCFGERAAEIIHIGQAIMEQKGEGNTIEYFVNTTFNYPTMAEAYRVAALNGLNRLF.

36–45 (ERYNNVGGGC) contacts FAD.

It belongs to the class-I pyridine nucleotide-disulfide oxidoreductase family. The cofactor is FAD.

It is found in the cytoplasm. It catalyses the reaction NAD(+) + NADPH = NADH + NADP(+). Its function is as follows. Conversion of NADPH, generated by peripheral catabolic pathways, to NADH, which can enter the respiratory chain for energy generation. The protein is Soluble pyridine nucleotide transhydrogenase of Yersinia enterocolitica serotype O:8 / biotype 1B (strain NCTC 13174 / 8081).